The primary structure comprises 188 residues: dCTP deaminase (188 aa).

Residues 111-116 (KSTYAR), 135-137 (TLE), Gln156, Tyr170, and Gln180 each bind dCTP. Catalysis depends on Glu137, which acts as the Proton donor/acceptor.

Belongs to the dCTP deaminase family. In terms of assembly, homotrimer.

It catalyses the reaction dCTP + H2O + H(+) = dUTP + NH4(+). It participates in pyrimidine metabolism; dUMP biosynthesis; dUMP from dCTP (dUTP route): step 1/2. Catalyzes the deamination of dCTP to dUTP. In Pseudomonas putida (strain W619), this protein is dCTP deaminase.